A 434-amino-acid chain; its full sequence is NADH-quinone oxidoreductase subunit F 1 (434 aa).

54 to 63 lines the NAD(+) pocket; that stretch reads GRGGAGFPTG. Residue 166 to 213 participates in FMN binding; sequence GAGAYICGEETALLESLEGKKGQPRLKPPFPANMGLYGCPTTVNNVES. 4 residues coordinate [4Fe-4S] cluster: Cys-345, Cys-348, Cys-351, and Cys-391.

This sequence belongs to the complex I 51 kDa subunit family. Requires FMN as cofactor. [4Fe-4S] cluster serves as cofactor.

The enzyme catalyses a quinone + NADH + 5 H(+)(in) = a quinol + NAD(+) + 4 H(+)(out). Functionally, NDH-1 shuttles electrons from NADH, via FMN and iron-sulfur (Fe-S) centers, to quinones in the respiratory chain. The immediate electron acceptor for the enzyme in this species is believed to be ubiquinone. Couples the redox reaction to proton translocation (for every two electrons transferred, four hydrogen ions are translocated across the cytoplasmic membrane), and thus conserves the redox energy in a proton gradient. This is NADH-quinone oxidoreductase subunit F 1 (nuoF1) from Rhizobium meliloti (strain 1021) (Ensifer meliloti).